The sequence spans 207 residues: MRELTKRQSEIYNYIKQVVQTKGYPPSVREIGEAVGLASSFTVHGHLSRLEEKGYIEGDPTKPRAIEIVSDQTNDNINMEETIHVPVIGKVTAGVPITAVENIEEYFPLPEHLTSTHNSDIFILNVVGDSMIEAGILDGDKVIVRSQTIAENGDIIVAMTEEDEATVKRFYKEKNRYRLQPENSTMEPIYLDNVAVIGKVIGLYREM.

A DNA-binding region (H-T-H motif) is located at residues 28–48; sequence VREIGEAVGLASSFTVHGHLS. Active-site for autocatalytic cleavage activity residues include Ser-130 and Lys-168.

It belongs to the peptidase S24 family. In terms of assembly, homodimer.

It carries out the reaction Hydrolysis of Ala-|-Gly bond in repressor LexA.. Represses a number of genes involved in the response to DNA damage (SOS response), including recA and lexA. In the presence of single-stranded DNA, RecA interacts with LexA causing an autocatalytic cleavage which disrupts the DNA-binding part of LexA, leading to derepression of the SOS regulon and eventually DNA repair. In Staphylococcus aureus (strain Newman), this protein is LexA repressor.